A 537-amino-acid chain; its full sequence is 2-succinyl-5-enolpyruvyl-6-hydroxy-3-cyclohexene-1-carboxylate synthase (537 aa).

This sequence belongs to the TPP enzyme family. MenD subfamily. As to quaternary structure, homodimer. Requires Mg(2+) as cofactor. It depends on Mn(2+) as a cofactor. Thiamine diphosphate is required as a cofactor.

It catalyses the reaction isochorismate + 2-oxoglutarate + H(+) = 5-enolpyruvoyl-6-hydroxy-2-succinyl-cyclohex-3-ene-1-carboxylate + CO2. Its pathway is quinol/quinone metabolism; 1,4-dihydroxy-2-naphthoate biosynthesis; 1,4-dihydroxy-2-naphthoate from chorismate: step 2/7. It participates in quinol/quinone metabolism; menaquinone biosynthesis. Catalyzes the thiamine diphosphate-dependent decarboxylation of 2-oxoglutarate and the subsequent addition of the resulting succinic semialdehyde-thiamine pyrophosphate anion to isochorismate to yield 2-succinyl-5-enolpyruvyl-6-hydroxy-3-cyclohexene-1-carboxylate (SEPHCHC). This Dechloromonas aromatica (strain RCB) protein is 2-succinyl-5-enolpyruvyl-6-hydroxy-3-cyclohexene-1-carboxylate synthase.